Here is a 109-residue protein sequence, read N- to C-terminus: Mitochondrial import inner membrane translocase subunit TIM12 (109 aa).

Position 2 is an N-acetylserine (serine 2). The short motif at 40–66 is the Twin CX3C motif element; sequence CLEKCIPHEGFGEPDLTKGEQCCIDRC. Disulfide bonds link cysteine 40–cysteine 66 and cysteine 44–cysteine 62.

The protein belongs to the small Tim family. As to quaternary structure, component of the TIM22 complex, whose core is composed of TIM18, TIM22 and TIM54, associated with the peripheral proteins MRS5/TIM12 and the 70 kDa heterohexamer composed of TIM9 and TIM10 (or TIM8 and TIM13). Interacts directly with both the TIM22 protein and the TIM9-TIM10 heterohexamer. Interacts with multi-pass transmembrane proteins in transit.

Its subcellular location is the mitochondrion inner membrane. The protein resides in the mitochondrion intermembrane space. Functionally, essential component of the TIM22 complex, a complex that mediates the import and insertion of multi-pass transmembrane proteins into the mitochondrial inner membrane. The TIM22 complex forms a twin-pore translocase that uses the membrane potential as external driving force. In the TIM22 complex, it acts as a docking point for the soluble TIM9-TIM10 heterohexamer that guides the target proteins in transit through the aqueous mitochondrial intermembrane space. This is Mitochondrial import inner membrane translocase subunit TIM12 (TIM12) from Saccharomyces cerevisiae (strain ATCC 204508 / S288c) (Baker's yeast).